The following is a 904-amino-acid chain: Envelope glycoprotein B (904 aa).

The N-terminal stretch at 1–30 (MRQGAPARGRRWFVVWALLGLTLGVLVASA) is a signal peptide. The span at 31 to 52 (APSSPGTPGVAAATQAANGGPA) shows a compositional bias: low complexity. The tract at residues 31–88 (APSSPGTPGVAAATQAANGGPATPAPPAPGAPPTGDPKPKKNRKPKPPKPPRPAGDNA) is disordered. Residues 31 to 774 (APSSPGTPGV…SGVSSFMSNP (744 aa)) lie on the Virion surface side of the membrane. A compositionally biased stretch (pro residues) spans 53–66 (TPAPPAPGAPPTGD). The segment covering 70–79 (KKNRKPKPPK) has biased composition (basic residues). Asparagine 87 and asparagine 141 each carry an N-linked (GlcNAc...) asparagine; by host glycan. 5 disulfide bridges follow: cysteine 116/cysteine 573, cysteine 133/cysteine 529, cysteine 207/cysteine 271, cysteine 364/cysteine 412, and cysteine 596/cysteine 633. 2 involved in fusion and/or binding to host membrane regions span residues 173 to 179 (VWFGHRY) and 258 to 265 (RVEAFHRY). N-linked (GlcNAc...) asparagine; by host glycans are attached at residues asparagine 398 and asparagine 430. The segment at 470–492 (REQSRKPPNPTPPPPGASANASV) is disordered. The segment covering 476 to 485 (PPNPTPPPPG) has biased composition (pro residues). An N-linked (GlcNAc...) asparagine; by host glycan is attached at asparagine 489. Asparagine 674 carries an N-linked (GlcNAc...) asparagine; by host glycan. The hydrophobic membrane proximal region stretch occupies residues 719-772 (IDTVIHADANAAMFAGLGAFFEGMGDLGRAVGKVVMGIVGGVVSAVSGVSSFMS). A helical transmembrane segment spans residues 775 to 795 (FGALAVGLLVLAGLAAAFFAF). The Intravirion segment spans residues 796 to 904 (RYVMRLQSNP…KDGDADEDDL (109 aa)). The Golgi targeting motif lies at 849–852 (YMAL). The disordered stretch occupies residues 883 to 904 (KRRNTNYTQVPNKDGDADEDDL). The short motif at 889–892 (YTQV) is the Internalization motif element.

It belongs to the herpesviridae glycoprotein B family. Homotrimer; disulfide-linked. Interacts with host receptor MYH9/NMMHC-IIA. Interacts with host receptor MYH10/NMMHC-IIB. Binds to heparan sulfate proteoglycans. Interacts with gH/gL heterodimer. Interacts with host DEFA1, DEFA2 and DEFA3; these interactions inhibit viral infection. In terms of processing, the cytoplasmic tail is phosphorylated by the viral kinase US3. Phosphorylation may be linked to a down-regulation of gB expression on cell surface. Post-translationally, ubiquitinated.

It localises to the virion membrane. It is found in the host cell membrane. The protein localises to the host endosome membrane. The protein resides in the host Golgi apparatus membrane. Its function is as follows. Envelope glycoprotein that forms spikes at the surface of virion envelope and binds to the host cell entry receptors MYH9/NMMHC-IIA and MYH10/NMMHC-IIB, promoting the virus entry into host cells. Essential for the initial attachment to heparan sulfate moieties of the host cell surface proteoglycans. Involved in fusion of viral and cellular membranes leading to virus entry into the host cell: following initial binding to its host cell entry receptors, membrane fusion is mediated by the fusion machinery composed at least of gB and the heterodimer gH/gL. May be involved in the fusion between the virion envelope and the outer nuclear membrane during virion egress. Also plays a role, together with gK, in virus-induced cell-to-cell fusion (syncytia formation). This chain is Envelope glycoprotein B, found in Homo sapiens (Human).